The chain runs to 92 residues: Large ribosomal subunit protein eL43z (92 aa).

The segment at 39-60 (CEFCGKFAVKRKAVGIWGCKDC) adopts a C4-type zinc-finger fold.

This sequence belongs to the eukaryotic ribosomal protein eL43 family.

This chain is Large ribosomal subunit protein eL43z, found in Oryza sativa subsp. japonica (Rice).